A 144-amino-acid polypeptide reads, in one-letter code: Cystatin-F (144 aa).

A signal peptide spans 1-18; the sequence is MWLAILLALCCLTSDTHG. N-linked (GlcNAc...) asparagine glycosylation occurs at Asn-61. The Secondary area of contact signature appears at 80–84; the sequence is QVVKG. Disulfide bonds link Cys-98-Cys-109 and Cys-123-Cys-143.

It belongs to the cystatin family.

The protein localises to the secreted. Inhibits papain and cathepsin L but with affinities lower than other cystatins. May play a role in immune regulation through inhibition of a unique target in the hematopoietic system. In Mus musculus (Mouse), this protein is Cystatin-F (Cst7).